The following is a 373-amino-acid chain: UDP-N-acetylglucosamine--N-acetylmuramyl-(pentapeptide) pyrophosphoryl-undecaprenol N-acetylglucosamine transferase (373 aa).

UDP-N-acetyl-alpha-D-glucosamine is bound by residues 15-17, N126, R170, S198, and Q300; that span reads TGG.

Belongs to the glycosyltransferase 28 family. MurG subfamily.

The protein localises to the cell inner membrane. The catalysed reaction is di-trans,octa-cis-undecaprenyl diphospho-N-acetyl-alpha-D-muramoyl-L-alanyl-D-glutamyl-meso-2,6-diaminopimeloyl-D-alanyl-D-alanine + UDP-N-acetyl-alpha-D-glucosamine = di-trans,octa-cis-undecaprenyl diphospho-[N-acetyl-alpha-D-glucosaminyl-(1-&gt;4)]-N-acetyl-alpha-D-muramoyl-L-alanyl-D-glutamyl-meso-2,6-diaminopimeloyl-D-alanyl-D-alanine + UDP + H(+). It participates in cell wall biogenesis; peptidoglycan biosynthesis. Functionally, cell wall formation. Catalyzes the transfer of a GlcNAc subunit on undecaprenyl-pyrophosphoryl-MurNAc-pentapeptide (lipid intermediate I) to form undecaprenyl-pyrophosphoryl-MurNAc-(pentapeptide)GlcNAc (lipid intermediate II). The protein is UDP-N-acetylglucosamine--N-acetylmuramyl-(pentapeptide) pyrophosphoryl-undecaprenol N-acetylglucosamine transferase of Methylobacterium nodulans (strain LMG 21967 / CNCM I-2342 / ORS 2060).